Reading from the N-terminus, the 227-residue chain is MAYPFQMGLQDATSPIMEELLHFHDHTLMIVFLISSLVLYIISLMLTTKLTHTSTMDAQEVETIWTILPAIILILIALPSLRILYMMDEINNPSLTVKTMGHQWYWSYEYTDYEDLSFDSYMIPTQELKPGELRLLEVDNRVVLPMELTIRMLISSEDVLHSWAVPSLGLKTDAIPGRLNQTTLMAMRPGLYYGQCSEICGSNHSFMPIVLELVPLSHFEKWSASLL.

At 1–14 the chain is on the mitochondrial intermembrane side; sequence MAYPFQMGLQDATS. Residues 15–45 traverse the membrane as a helical segment; that stretch reads PIMEELLHFHDHTLMIVFLISSLVLYIISLM. Residues 46-59 lie on the Mitochondrial matrix side of the membrane; it reads LTTKLTHTSTMDAQ. A helical membrane pass occupies residues 60–87; the sequence is EVETIWTILPAIILILIALPSLRILYMM. The Mitochondrial intermembrane portion of the chain corresponds to 88-227; the sequence is DEINNPSLTV…HFEKWSASLL (140 aa). The Cu cation site is built by His161, Cys196, Glu198, Cys200, His204, and Met207. Glu198 contacts Mg(2+).

The protein belongs to the cytochrome c oxidase subunit 2 family. Component of the cytochrome c oxidase (complex IV, CIV), a multisubunit enzyme composed of 14 subunits. The complex is composed of a catalytic core of 3 subunits MT-CO1, MT-CO2 and MT-CO3, encoded in the mitochondrial DNA, and 11 supernumerary subunits COX4I, COX5A, COX5B, COX6A, COX6B, COX6C, COX7A, COX7B, COX7C, COX8 and NDUFA4, which are encoded in the nuclear genome. The complex exists as a monomer or a dimer and forms supercomplexes (SCs) in the inner mitochondrial membrane with NADH-ubiquinone oxidoreductase (complex I, CI) and ubiquinol-cytochrome c oxidoreductase (cytochrome b-c1 complex, complex III, CIII), resulting in different assemblies (supercomplex SCI(1)III(2)IV(1) and megacomplex MCI(2)III(2)IV(2)). Found in a complex with TMEM177, COA6, COX18, COX20, SCO1 and SCO2. Interacts with TMEM177 in a COX20-dependent manner. Interacts with COX20. Interacts with COX16. The cofactor is Cu cation.

The protein localises to the mitochondrion inner membrane. It catalyses the reaction 4 Fe(II)-[cytochrome c] + O2 + 8 H(+)(in) = 4 Fe(III)-[cytochrome c] + 2 H2O + 4 H(+)(out). Its function is as follows. Component of the cytochrome c oxidase, the last enzyme in the mitochondrial electron transport chain which drives oxidative phosphorylation. The respiratory chain contains 3 multisubunit complexes succinate dehydrogenase (complex II, CII), ubiquinol-cytochrome c oxidoreductase (cytochrome b-c1 complex, complex III, CIII) and cytochrome c oxidase (complex IV, CIV), that cooperate to transfer electrons derived from NADH and succinate to molecular oxygen, creating an electrochemical gradient over the inner membrane that drives transmembrane transport and the ATP synthase. Cytochrome c oxidase is the component of the respiratory chain that catalyzes the reduction of oxygen to water. Electrons originating from reduced cytochrome c in the intermembrane space (IMS) are transferred via the dinuclear copper A center (CU(A)) of subunit 2 and heme A of subunit 1 to the active site in subunit 1, a binuclear center (BNC) formed by heme A3 and copper B (CU(B)). The BNC reduces molecular oxygen to 2 water molecules using 4 electrons from cytochrome c in the IMS and 4 protons from the mitochondrial matrix. The protein is Cytochrome c oxidase subunit 2 (MT-CO2) of Ailurus fulgens (Himalayan red panda).